Here is a 359-residue protein sequence, read N- to C-terminus: Histidinol-phosphate aminotransferase (359 aa).

An N6-(pyridoxal phosphate)lysine modification is found at lysine 217.

The protein belongs to the class-II pyridoxal-phosphate-dependent aminotransferase family. Histidinol-phosphate aminotransferase subfamily. In terms of assembly, homodimer. Pyridoxal 5'-phosphate serves as cofactor.

It catalyses the reaction L-histidinol phosphate + 2-oxoglutarate = 3-(imidazol-4-yl)-2-oxopropyl phosphate + L-glutamate. It functions in the pathway amino-acid biosynthesis; L-histidine biosynthesis; L-histidine from 5-phospho-alpha-D-ribose 1-diphosphate: step 7/9. This Salmonella choleraesuis (strain SC-B67) protein is Histidinol-phosphate aminotransferase.